Consider the following 358-residue polypeptide: 3-isopropylmalate dehydrogenase (358 aa).

R92, R102, R130, and D224 together coordinate substrate. Positions 224, 248, and 252 each coordinate Mg(2+). 282–294 (GSAPDIAGQGIAN) provides a ligand contact to NAD(+).

Belongs to the isocitrate and isopropylmalate dehydrogenases family. LeuB type 1 subfamily. In terms of assembly, homodimer. The cofactor is Mg(2+). Mn(2+) is required as a cofactor.

The protein localises to the cytoplasm. It carries out the reaction (2R,3S)-3-isopropylmalate + NAD(+) = 4-methyl-2-oxopentanoate + CO2 + NADH. The protein operates within amino-acid biosynthesis; L-leucine biosynthesis; L-leucine from 3-methyl-2-oxobutanoate: step 3/4. In terms of biological role, catalyzes the oxidation of 3-carboxy-2-hydroxy-4-methylpentanoate (3-isopropylmalate) to 3-carboxy-4-methyl-2-oxopentanoate. The product decarboxylates to 4-methyl-2 oxopentanoate. The chain is 3-isopropylmalate dehydrogenase from Bordetella pertussis (strain Tohama I / ATCC BAA-589 / NCTC 13251).